The following is a 313-amino-acid chain: Ribosomal protein L11 methyltransferase (313 aa).

The S-adenosyl-L-methionine site is built by Thr164, Gly185, Asp207, and Asn249.

This sequence belongs to the methyltransferase superfamily. PrmA family.

It is found in the cytoplasm. It carries out the reaction L-lysyl-[protein] + 3 S-adenosyl-L-methionine = N(6),N(6),N(6)-trimethyl-L-lysyl-[protein] + 3 S-adenosyl-L-homocysteine + 3 H(+). In terms of biological role, methylates ribosomal protein L11. The protein is Ribosomal protein L11 methyltransferase of Clostridium botulinum (strain Eklund 17B / Type B).